Here is a 1155-residue protein sequence, read N- to C-terminus: MGLRFVLGRSGSGKSTYILDEIKKEAQKNETTSIILLVPEQYTFEAENRVSKLFLGKEKDKYLRVRVLSFKTLSNIVFSQVGGLTDVNINSSGKAMMVYRAIEDVSEELNVFSKSKSQSGFVSSITDMISEMKQYNISPEMLENISGELDNETLSLKLKDISKIYNSFEGKLHENYVDAQDMLTSLTSKIELSSYLDGACVYIDEFTGFTPNQYNVIKSILNKSKSVNISLTVDDINYIGYSKSDMFSRTKFTYSKLTQLCNEEGIKILPQVNLNTGVIKRFEKVKELQHLERFYNAYPYKIYSNPTENIKIKEFNNLYSEVEEIAREIVHLVRDKNVRYRDITIATRDLNRYDFLVHSIFNEYNIPNFIDKKREAKSNPIVILIISALEMKNRRYGYETMFRYLKSGLIGIDNDDINLLENYVLANGIKGKKWFDEKWDYRITQSLSGQESEFELELKEKINEIKNRVLEPIVILQEKLRGKNRVKEICRYIYEFLLDINMPETIESLIVNFKDKGELDVANQYSQVWDIVVDILDQMVELMGDEIISLEKFIKLITLGFDEYELGLVPPSIDQVLVSSVDRMKNPDTKYLYLVGTTDGVFPLITKDSGILSDNDRESLGNKGIEVDIDSKTRSFEEQFLVYKALTSTSKNLTITYPISDHEGKTLRPSIIISRLKKIFPNIENKSYLVEENKNTDKDILKKITVKSPTFNELINVIKNYDSDGYNTEEINSIWLDIYRYYLKDEIYSSITKKVIKGLSYTNQVHKIEEKKIRSLYKSNSLSISRLEKYAECPFAYFIQYGLKAKKRKEYSFTPPDLGTFIHNILDRFSKELLQDNLTWRDIDEKYIELKIGIIVDEIILKIPGYILNSSERYKYLAYRLKNMLTTAITIISQQIKQGSFEPIDYEVKFGDNGKYPPIKMVLENGQEVSLIGQIDRVDEFEEGENKYIRIIDYKSGNKSISLTEIYYGLQLQLLVYLDAILESAKDEDMNINPAAILYCRINNPIAKFNEDKDDEEIQEAILKELRMKGLVVKDSHIVKEMDKSLIDGERKNSLVIPVGLTKDGNVGKSTSAISYEDFKLLRKYVRHAIKDLCEEMLSGEIRIAPYKHKDGTSCDFCDYSAICQFDSTIKDNKYKNLNNKSNEEIIKMMKGDVN.

8 to 15 provides a ligand contact to ATP; the sequence is GRSGSGKS. [4Fe-4S] cluster contacts are provided by cysteine 793, cysteine 1115, cysteine 1118, and cysteine 1124.

The protein belongs to the helicase family. AddB/RexB type 1 subfamily. Heterodimer of AddA and AddB. The cofactor is Mg(2+). It depends on [4Fe-4S] cluster as a cofactor.

In terms of biological role, the heterodimer acts as both an ATP-dependent DNA helicase and an ATP-dependent, dual-direction single-stranded exonuclease. Recognizes the chi site generating a DNA molecule suitable for the initiation of homologous recombination. The AddB subunit has 5' -&gt; 3' nuclease activity but not helicase activity. This is ATP-dependent helicase/deoxyribonuclease subunit B from Clostridioides difficile (strain 630) (Peptoclostridium difficile).